We begin with the raw amino-acid sequence, 22 residues long: Brevinin-2LTa (22 aa).

Expressed by the skin glands.

Its subcellular location is the secreted. Its function is as follows. Has antibacterial activity. This is Brevinin-2LTa from Rana latastei (Italian agile frog).